The following is a 386-amino-acid chain: GTPase Obg (386 aa).

Positions 1–159 constitute an Obg domain; it reads MKFVDEAKIK…RNLLLELLLL (159 aa). The 174-residue stretch at 160–333 folds into the OBG-type G domain; it reads ADVGMLGLPN…LCRDVVEYLE (174 aa). GTP is bound by residues 166–173, 191–195, 213–216, 283–286, and 314–316; these read GLPNAGKS, FTTLV, DIPG, NKTD, and AAI. Residues Ser173 and Thr193 each contribute to the Mg(2+) site.

The protein belongs to the TRAFAC class OBG-HflX-like GTPase superfamily. OBG GTPase family. As to quaternary structure, monomer. Requires Mg(2+) as cofactor.

The protein resides in the cytoplasm. Its function is as follows. An essential GTPase which binds GTP, GDP and possibly (p)ppGpp with moderate affinity, with high nucleotide exchange rates and a fairly low GTP hydrolysis rate. Plays a role in control of the cell cycle, stress response, ribosome biogenesis and in those bacteria that undergo differentiation, in morphogenesis control. This chain is GTPase Obg, found in Psychromonas ingrahamii (strain DSM 17664 / CCUG 51855 / 37).